The chain runs to 555 residues: Galectin-3-binding protein (555 aa).

An N-terminal signal peptide occupies residues 1 to 18 (MAPLRLFWIWLLVVGTRG). Residues 24-124 (MRLADGGSAN…HDKDASVICT (101 aa)) form the SRCR domain. Cystine bridges form between cysteine 49-cysteine 113, cysteine 62-cysteine 123, and cysteine 93-cysteine 103. The N-linked (GlcNAc...) asparagine glycan is linked to asparagine 69. Residue asparagine 125 is glycosylated (N-linked (GlcNAc...) asparagine). One can recognise a BTB domain in the interval 153–221 (CDLFITVKVR…LYSRRIDVSL (69 aa)). The region spanning 260 to 360 (PLELYAYALA…MPPQDLFSLQ (101 aa)) is the BACK domain. N-linked (GlcNAc...) asparagine glycosylation is found at asparagine 362, asparagine 398, and asparagine 550.

In terms of assembly, homodimers and homomultimers. The multimers form ring-like structures with a diameter of 30-40 nm. Binds LGALS1 and LGALS3. Binds ITGB1, COL4A1, COL5A1, COL6A1, FN1 and NID. Interacts with the gamma-tubulin ring complex (gamma-TuRC), composed of gamma-tubulin, TUBGCP2, TUBGCP3, TUBGCP4, TUBGCP5 and TUBGCP6. The unglycosylated form interacts with PDE4DIP; this interaction, which is PDE4DIP isoform-specific, may connect a pericentrosomal complex, made of AKAP9, CDK5RAP2, EB1/MAPRE1 and PDE4DIP, to the gamma-tubulin ring complex (gamma-TuRC) to promote microtubule assembly and acetylation.

It localises to the secreted. The protein localises to the extracellular space. Its subcellular location is the extracellular matrix. Functionally, promotes integrin-mediated cell adhesion. May stimulate host defense against viruses and tumor cells. This chain is Galectin-3-binding protein (LGALS3BP), found in Bos taurus (Bovine).